We begin with the raw amino-acid sequence, 119 residues long: NADH-quinone oxidoreductase subunit A (119 aa).

The next 3 membrane-spanning stretches (helical) occupy residues Tyr-7–Gly-27, Leu-63–Val-83, and Ile-88–Ala-108.

It belongs to the complex I subunit 3 family. NDH-1 is composed of 14 different subunits. Subunits NuoA, H, J, K, L, M, N constitute the membrane sector of the complex.

Its subcellular location is the cell inner membrane. It catalyses the reaction a quinone + NADH + 5 H(+)(in) = a quinol + NAD(+) + 4 H(+)(out). NDH-1 shuttles electrons from NADH, via FMN and iron-sulfur (Fe-S) centers, to quinones in the respiratory chain. The immediate electron acceptor for the enzyme in this species is believed to be ubiquinone. Couples the redox reaction to proton translocation (for every two electrons transferred, four hydrogen ions are translocated across the cytoplasmic membrane), and thus conserves the redox energy in a proton gradient. The polypeptide is NADH-quinone oxidoreductase subunit A (Burkholderia mallei (strain NCTC 10247)).